A 227-amino-acid chain; its full sequence is Translation initiation factor 6 (227 aa).

The protein belongs to the eIF-6 family.

Its function is as follows. Binds to the 50S ribosomal subunit and prevents its association with the 30S ribosomal subunit to form the 70S initiation complex. The polypeptide is Translation initiation factor 6 (Staphylothermus marinus (strain ATCC 43588 / DSM 3639 / JCM 9404 / F1)).